Reading from the N-terminus, the 60-residue chain is Beta-defensin 11 (60 aa).

The first 22 residues, Met1 to Ser22, serve as a signal peptide directing secretion. 3 disulfides stabilise this stretch: Cys27-Cys56, Cys34-Cys49, and Cys39-Cys57.

This sequence belongs to the beta-defensin family. As to expression, neutrophilic granules.

The protein resides in the secreted. Has bactericidal activity. Active against E.coli ML35 and S.aureus 502A. This Bos taurus (Bovine) protein is Beta-defensin 11 (DEFB11).